The chain runs to 106 residues: COX assembly mitochondrial protein homolog (106 aa).

N-acetylalanine is present on Ala2. In terms of domain architecture, CHCH spans 28-71; it reads KERCSEQVQDFTKCCKNSGVLMVVKCRKENSALKECLTAYYNDP. Short sequence motifs (cx9C motif) lie at residues 31–41 and 53–63; these read CSEQVQDFTKC and CRKENSALKEC. 2 disulfides stabilise this stretch: Cys31–Cys63 and Cys41–Cys53.

The protein belongs to the CMC family. As to quaternary structure, component of the MITRAC (mitochondrial translation regulation assembly intermediate of cytochrome c oxidase complex) complex, the core components of this complex being COA3/MITRAC12 and COX14.

The protein resides in the mitochondrion. In terms of biological role, component of the MITRAC (mitochondrial translation regulation assembly intermediate of cytochrome c oxidase complex) complex, that regulates cytochrome c oxidase assembly. The protein is COX assembly mitochondrial protein homolog (CMC1) of Homo sapiens (Human).